A 186-amino-acid polypeptide reads, in one-letter code: uncharacterized protein (186 aa).

Residues 121 to 146 (TSPLLKKNKPSSDQDDTSKQSFDQDE) form a disordered region.

Belongs to the chlamydial CPn_0422/CT_273/TC_0545 family.

This is an uncharacterized protein from Chlamydia muridarum (strain MoPn / Nigg).